We begin with the raw amino-acid sequence, 876 residues long: MHQAYSVHSILKQGVQIESIAAYGNHVILGTRSGQLIMYSVDEETGVDMRMFNKNFSRKPITQMEVIASENLLFVLTDLQVQVCDIRRIESNFAFMHSAPDTKGCTLFTMDVDTPKSTTGRVATVIRVCCAIRRRLVFFFWKEDKLNSLELIIELSDVPRTLCWVGHAVCVGFKDEYVVYDISGKAPKKHNLFLTSSSISRDPCICLIRNNMLGISKDSYLVVVDPSQYKESDGINNSTDVRPAAMDSNSSLTPLLWSSPLLDLVWDEPFAVGRVNNAIEVRSLVGKDTLVQTIPELQKTKFLVHADKGTIFAAATSELWCIRMVEIPIQRQQLLQQKKFQLAIELTQISDEPAADRAQTIRQIHMLYAKELFTNKEFSAAMKEFEKAAIDPYDVIRLFPNLVPEPKPGTEDVTVPTSSTPALEDSDLENAYLALIEYLAWARQREVVKLRDTKSSSKSLLEIIDTTLLKCYLQTNDSLVAPLLRLNQCHLEESEKTLKKHNKISELIILYQMKGKHKEALKLLREQASIEGSVLQGRKRTIRYLQELGGDHLPLIFEFADWVLNDNPEEGLTIFTDELIEVESLPRAKVLDFFISKHKALVIPYLEHVITEWKDGNTLLHNVLLKQYREKVQRLLAQQEKGEEVPELIPMRAKLYKMLEESNDYSPDRLLEEFPTNILLEERALILGRLKKHDNVLSIYIHVLGDVAKATAYAEAHYKEDKHIFHTLIKCILIPPTQPLYDGVPLHPDFSQVNREVALEILNTHATRIDPFEIFEHLPDDMPMPQLEKYLEKSIRKMMADKHEMQMMCGFLEAESTRLENALEEQRNISFELNESSVCSECKKRFQTQSAFVRYPNGHIVHLSCHDRLARAAAQQ.

Residues 14–310 (GVQIESIAAY…KFLVHADKGT (297 aa)) enclose the CNH domain. One copy of the CHCR repeat lies at 578–741 (ELIEVESLPR…ILIPPTQPLY (164 aa)).

The protein belongs to the VAM6/VPS39 family. As to quaternary structure, part of the homotypic fusion and vacuole protein sorting (HOPS) complex, composed of Vps16A, car/Vps33A, dor/Vps18, Vps39, Vps11 and lt/Vps41. Interacts with Rab2 (GTP-bound form); the interaction is probably direct.

The protein localises to the cytoplasm. The protein resides in the lysosome membrane. It is found in the late endosome membrane. Its subcellular location is the late endosome. It localises to the lysosome. In terms of biological role, part of the homotypic fusion and vacuole protein sorting (HOPS) tethering complex involved in endo-lysosomal vesicle trafficking and lysosome biogenesis. The HOPS complex facilitates docking and fusion of lysosomes with late endosomes and several other types of vesicles. The HOPS complex is also involved in autophagy and crinophagy (the elimination of unused secretory granules through their fusion with lysosomes). The HOPS complex mediates autophagocitic flux, probably by binding autophagosome-associated Syx17/syntaxin 17, promoting assembly of the trans-SNARE complex and instigating autophagosome-lysosome fusion. Independent of Syx17/syntaxin 17, HOPS is involved in biosynthetic transport to lysosomes and lysosome-related organelles such as eye-pigment granules. Required for autophagocytosis-dependent remodeling of myofibrils and transverse-tubules (T-tubules) during metamorphosis. This is Vacuolar protein sorting-associated protein 39 homolog from Drosophila melanogaster (Fruit fly).